We begin with the raw amino-acid sequence, 365 residues long: 3-dehydroquinate synthase (365 aa).

Residues 106-110 (GVIGD), 130-131 (TT), lysine 142, lysine 151, and 169-172 (FFAT) each bind NAD(+). Residues glutamate 184, histidine 247, and histidine 264 each coordinate Zn(2+).

The protein belongs to the sugar phosphate cyclases superfamily. Dehydroquinate synthase family. NAD(+) serves as cofactor. Requires Co(2+) as cofactor. It depends on Zn(2+) as a cofactor.

The protein localises to the cytoplasm. It catalyses the reaction 7-phospho-2-dehydro-3-deoxy-D-arabino-heptonate = 3-dehydroquinate + phosphate. Its pathway is metabolic intermediate biosynthesis; chorismate biosynthesis; chorismate from D-erythrose 4-phosphate and phosphoenolpyruvate: step 2/7. Functionally, catalyzes the conversion of 3-deoxy-D-arabino-heptulosonate 7-phosphate (DAHP) to dehydroquinate (DHQ). This chain is 3-dehydroquinate synthase, found in Listeria monocytogenes serovar 1/2a (strain ATCC BAA-679 / EGD-e).